Here is a 308-residue protein sequence, read N- to C-terminus: Testis-specific Y-encoded protein 8 (308 aa).

The protein belongs to the nucleosome assembly protein (NAP) family.

It is found in the cytoplasm. The protein localises to the nucleus. Its function is as follows. May be involved in sperm differentiation and proliferation. The protein is Testis-specific Y-encoded protein 8 (TSPY8) of Homo sapiens (Human).